The chain runs to 385 residues: Bifunctional chorismate mutase/prephenate dehydratase (385 aa).

One can recognise a Chorismate mutase domain in the interval 1 to 92; the sequence is MPANNSLLIF…ESVATQKKLL (92 aa). Substrate contacts are provided by Arg-11, Arg-28, Lys-39, Asp-48, Glu-52, Ser-84, and Gln-88. One can recognise a Prephenate dehydratase domain in the interval 105 to 285; that stretch reads NFSFLGPKGS…NITRFILLNR (181 aa). The tract at residues 286–385 is regulatory; it reads NPKKISKNIP…PSEKITPIAP (100 aa). One can recognise an ACT domain in the interval 299–376; it reads TLIFTTGQEA…RFIKILGCYP (78 aa).

The protein resides in the cytoplasm. The catalysed reaction is chorismate = prephenate. It carries out the reaction prephenate + H(+) = 3-phenylpyruvate + CO2 + H2O. The protein operates within amino-acid biosynthesis; L-phenylalanine biosynthesis; phenylpyruvate from prephenate: step 1/1. It participates in metabolic intermediate biosynthesis; prephenate biosynthesis; prephenate from chorismate: step 1/1. Catalyzes the Claisen rearrangement of chorismate to prephenate and the decarboxylation/dehydration of prephenate to phenylpyruvate. The protein is Bifunctional chorismate mutase/prephenate dehydratase (pheA) of Buchnera aphidicola subsp. Acyrthosiphon pisum (strain APS) (Acyrthosiphon pisum symbiotic bacterium).